The primary structure comprises 812 residues: E3 UFM1-protein ligase 1 homolog (812 aa).

Positions 389-495 are disordered; it reads IKHSAGQGKP…KTKEDNTNIF (107 aa). Composition is skewed to basic and acidic residues over residues 403–415 and 475–491; these read SEHR…KDLG and DAKH…KEDN.

It belongs to the UFL1 family.

In terms of biological role, E3 UFM1-protein ligase that mediates ufmylation of target proteins. The polypeptide is E3 UFM1-protein ligase 1 homolog (Oryza sativa subsp. indica (Rice)).